Reading from the N-terminus, the 354-residue chain is Methylthioribose-1-phosphate isomerase (354 aa).

Substrate contacts are provided by residues 54 to 56 (RGA), R97, and Q204. D245 acts as the Proton donor in catalysis. 255 to 256 (NK) contributes to the substrate binding site.

The protein belongs to the eIF-2B alpha/beta/delta subunits family. MtnA subfamily.

The catalysed reaction is 5-(methylsulfanyl)-alpha-D-ribose 1-phosphate = 5-(methylsulfanyl)-D-ribulose 1-phosphate. The protein operates within amino-acid biosynthesis; L-methionine biosynthesis via salvage pathway; L-methionine from S-methyl-5-thio-alpha-D-ribose 1-phosphate: step 1/6. Its function is as follows. Catalyzes the interconversion of methylthioribose-1-phosphate (MTR-1-P) into methylthioribulose-1-phosphate (MTRu-1-P). The protein is Methylthioribose-1-phosphate isomerase of Albidiferax ferrireducens (strain ATCC BAA-621 / DSM 15236 / T118) (Rhodoferax ferrireducens).